Reading from the N-terminus, the 500-residue chain is Probable cardiolipin synthase YwiE (500 aa).

The next 3 helical transmembrane spans lie at 6 to 26 (LEFF…FFPV), 31 to 51 (FYGG…SLIL), and 59 to 79 (TLLW…FYLF). PLD phosphodiesterase domains lie at 237 to 264 (LNFR…GKEY) and 413 to 440 (QKGF…DMRS). Catalysis depends on residues His242, Lys244, Asp249, His418, Lys420, and Asp425.

This sequence belongs to the phospholipase D family. Cardiolipin synthase subfamily.

Its subcellular location is the cell membrane. It carries out the reaction 2 a 1,2-diacyl-sn-glycero-3-phospho-(1'-sn-glycerol) = a cardiolipin + glycerol. Functionally, catalyzes the reversible phosphatidyl group transfer from one phosphatidylglycerol molecule to another to form cardiolipin (CL) (diphosphatidylglycerol) and glycerol. May have a role in the heat shock response since the level of the transcript of ywiE increases after a heat shock. The sequence is that of Probable cardiolipin synthase YwiE (ywiE) from Bacillus subtilis (strain 168).